Consider the following 41-residue polypeptide: Photosystem I reaction center subunit IX (41 aa).

A helical transmembrane segment spans residues 7–27; sequence YLSTAPVVAFAWLTFTAGFII.

Belongs to the PsaJ family.

Its subcellular location is the plastid. The protein localises to the chloroplast thylakoid membrane. In terms of biological role, may help in the organization of the PsaE and PsaF subunits. This chain is Photosystem I reaction center subunit IX, found in Stigeoclonium helveticum (Green alga).